Consider the following 528-residue polypeptide: Na(+)/H(+) antiporter NhaB (528 aa).

11 helical membrane passes run isoleucine 10 to isoleucine 30, tyrosine 63 to alanine 83, valine 96 to phenylalanine 116, valine 131 to isoleucine 165, leucine 204 to proline 224, phenylalanine 240 to leucine 260, valine 305 to valine 325, leucine 359 to isoleucine 379, leucine 391 to glycine 411, alanine 449 to isoleucine 469, and methionine 476 to glutamate 496.

Belongs to the NhaB Na(+)/H(+) (TC 2.A.34) antiporter family.

It localises to the cell inner membrane. It carries out the reaction 2 Na(+)(in) + 3 H(+)(out) = 2 Na(+)(out) + 3 H(+)(in). Functionally, na(+)/H(+) antiporter that extrudes sodium in exchange for external protons. In Shewanella putrefaciens (strain CN-32 / ATCC BAA-453), this protein is Na(+)/H(+) antiporter NhaB.